The following is a 231-amino-acid chain: Protein OPG061 (231 aa).

Belongs to the orthopoxvirus OPG058 family.

Its subcellular location is the host nucleus. The protein localises to the host nucleolus. This chain is Protein OPG061 (OPG061), found in Vaccinia virus (strain Western Reserve) (VACV).